Consider the following 677-residue polypeptide: DNA ligase (677 aa).

Residues 38–42, 87–88, and Glu-119 contribute to the NAD(+) site; these read DSVYD and SL. Lys-121 acts as the N6-AMP-lysine intermediate in catalysis. NAD(+)-binding residues include Arg-142, Glu-179, Lys-296, and Lys-320. Zn(2+) is bound by residues Cys-414, Cys-417, Cys-432, and Cys-438. In terms of domain architecture, BRCT spans 595–677; the sequence is VVKSEIAGKT…LKLLKSKGVF (83 aa).

Belongs to the NAD-dependent DNA ligase family. LigA subfamily. Requires Mg(2+) as cofactor. It depends on Mn(2+) as a cofactor.

It catalyses the reaction NAD(+) + (deoxyribonucleotide)n-3'-hydroxyl + 5'-phospho-(deoxyribonucleotide)m = (deoxyribonucleotide)n+m + AMP + beta-nicotinamide D-nucleotide.. Functionally, DNA ligase that catalyzes the formation of phosphodiester linkages between 5'-phosphoryl and 3'-hydroxyl groups in double-stranded DNA using NAD as a coenzyme and as the energy source for the reaction. It is essential for DNA replication and repair of damaged DNA. The chain is DNA ligase from Coxiella burnetii (strain CbuG_Q212) (Coxiella burnetii (strain Q212)).